A 351-amino-acid chain; its full sequence is DNA integrity scanning protein DisA (351 aa).

The DAC domain occupies 4–142 (RSGFWQVLQQ…GPMKYILRDF (139 aa)). ATP contacts are provided by residues Gly-71, Leu-89, and 102–106 (TRHRT).

The protein belongs to the DisA family. Homooctamer. Requires Mg(2+) as cofactor.

The catalysed reaction is 2 ATP = 3',3'-c-di-AMP + 2 diphosphate. Functionally, participates in a DNA-damage check-point that is active prior to asymmetric division when DNA is damaged. DisA forms globular foci that rapidly scan along the chromosomes during sporulation, searching for lesions. When a lesion is present, DisA pauses at the lesion site. This triggers a cellular response that culminates in a temporary block in sporulation initiation. Also has diadenylate cyclase activity, catalyzing the condensation of 2 ATP molecules into cyclic di-AMP (c-di-AMP). c-di-AMP acts as a signaling molecule that couples DNA integrity with progression of sporulation. The rise in c-di-AMP level generated by DisA while scanning the chromosome, operates as a positive signal that advances sporulation; upon encountering a lesion, the DisA focus arrests at the damaged site and halts c-di-AMP synthesis. The sequence is that of DNA integrity scanning protein DisA from Symbiobacterium thermophilum (strain DSM 24528 / JCM 14929 / IAM 14863 / T).